The sequence spans 618 residues: Mitochondrial Rho GTPase 1 (618 aa).

The Cytoplasmic portion of the chain corresponds to 1-592; it reads MKKDVRILLV…TQADLKSSTF (592 aa). Residues 2–168 enclose the Miro 1 domain; the sequence is KKDVRILLVG…FYYAQKAVLH (167 aa). Arg14, Gly16, Lys17, Thr18, and Ser19 together coordinate GTP. Thr18 is a Mg(2+) binding site. The Mg(2+) site is built by Pro35 and Asp57. GTP is bound at residue Ser59. At Lys92 the chain carries N6-acetyllysine. GTP is bound by residues Asn118, Lys119, Asp121, Ala149, and Lys150. A Glycyl lysine isopeptide (Lys-Gly) (interchain with G-Cter in ubiquitin) cross-link involves residue Lys153. Positions 184-219 constitute an EF-hand 1 domain; that stretch reads ACIKALTRIFKISDQDNDGTLNDAELNFFQRICFNT. Positions 197, 199, 201, 203, and 208 each coordinate Ca(2+). A Glycyl lysine isopeptide (Lys-Gly) (interchain with G-Cter in ubiquitin) cross-link involves residue Lys235. One can recognise an EF-hand 2 domain in the interval 304–339; that stretch reads HAYLFLQSTFDKHDLDRDCALSPDELKDLFKVFPYI. Ca(2+)-binding residues include Asp317, Asp319, Asp321, Ala323, and Glu328. A Miro 2 domain is found at 416-579; the sequence is RNVFRCNVIG…FVKLTTMAMY (164 aa). Positions 428, 429, 430, 431, 432, 433, and 447 each coordinate GTP. Asn428 serves as a coordination point for Mg(2+). 15 residues coordinate GDP: Asn428, Cys429, Gly430, Lys431, Ser432, Gly433, Lys447, Lys454, Ser477, Glu478, Lys528, Asp530, Thr558, Cys559, and Asn560. Residues Lys528, Asp530, Thr558, and Cys559 each coordinate GTP. A Glycyl lysine isopeptide (Lys-Gly) (interchain with G-Cter in ubiquitin) cross-link involves residue Lys572. A helical; Anchor for type IV membrane protein transmembrane segment spans residues 593 to 615; the sequence is WLRASFGATVFAVLGFAMYKALL. At 616-618 the chain is on the mitochondrial intermembrane side; the sequence is KQR.

It belongs to the mitochondrial Rho GTPase family. As to quaternary structure, homodimer. Interacts with the kinesin-binding proteins TRAK1/OIP106 and TRAK2/GRIF1, forming a link between mitochondria and the trafficking apparatus of the microtubules. Interacts with RAP1GDS1. Interacts with ARMCX1. Found in a complex with KIF5B, OGT, RHOT2 and TRAK1. Ubiquitinated by PRKN during mitophagy, leading to its degradation and enhancement of mitophagy. Deubiquitinated by USP30. In terms of processing, acetylation on Lys-92 decreases sensitivity of mitochondrial transport to elevated Ca(2+) levels, increases mitochondrial transport and promotes axon growth. Deacetylated by HDAC6 which blocks mitochondrial transport and mediates axon growth inhibition. In terms of tissue distribution, ubiquitously expressed. Expressed at high level in heart and skeletal muscle.

It localises to the mitochondrion outer membrane. The enzyme catalyses GTP + H2O = GDP + phosphate + H(+). It catalyses the reaction ATP + H2O = ADP + phosphate + H(+). The catalysed reaction is UTP + H2O = UDP + phosphate + H(+). In terms of biological role, atypical mitochondrial nucleoside-triphosphatase (NTPase) involved in mitochondrial trafficking. Probably involved in control of anterograde transport of mitochondria and their subcellular distribution. Promotes mitochondrial fission during high calcium conditions. Can hydrolyze GTP, ATP and UTP. The sequence is that of Mitochondrial Rho GTPase 1 (RHOT1) from Homo sapiens (Human).